Consider the following 975-residue polypeptide: Monofunctional C1-tetrahydrofolate synthase, mitochondrial (975 aa).

Residues 1–30 constitute a mitochondrion transit peptide; the sequence is MSARLPFVLRRLARPQHPGSPRRLPSLCRA. Positions 13 to 45 are disordered; it reads ARPQHPGSPRRLPSLCRASSGRGSGCGGGEGLL. Residues 31 to 345 form a methylenetetrahydrofolate dehydrogenase and cyclohydrolase region; sequence SSGRGSGCGG…REQQHRRWRL (315 aa). A compositionally biased stretch (gly residues) spans 34 to 44; it reads RGSGCGGGEGL. N6-acetyllysine; alternate is present on Lys-187. Lys-187 carries the post-translational modification N6-succinyllysine; alternate. Residues 346–975 are formyltetrahydrofolate synthetase; sequence HCLKLQPLSP…TETEQVKGLF (630 aa). A Phosphoserine modification is found at Ser-354. An ATP-binding site is contributed by 420-427; it reads TPLGEGKS. At Lys-593 the chain carries N6-succinyllysine.

This sequence in the N-terminal section; belongs to the tetrahydrofolate dehydrogenase/cyclohydrolase family. The protein in the C-terminal section; belongs to the formate--tetrahydrofolate ligase family. In terms of assembly, homodimer.

It localises to the mitochondrion. It carries out the reaction (6S)-5,6,7,8-tetrahydrofolate + formate + ATP = (6R)-10-formyltetrahydrofolate + ADP + phosphate. The protein operates within one-carbon metabolism; tetrahydrofolate interconversion. In terms of biological role, may provide the missing metabolic reaction required to link the mitochondria and the cytoplasm in the mammalian model of one-carbon folate metabolism complementing thus the enzymatic activities of MTHFD2. In Bos taurus (Bovine), this protein is Monofunctional C1-tetrahydrofolate synthase, mitochondrial (MTHFD1L).